Consider the following 512-residue polypeptide: MTVTYTARVAKARFGGFSKLLLLWRGSIYKLLWRELLCFLGLFMALSAAYRFVLTEEQKRYFEKLVLYCDRYASLIPVSFVLGFYVTLVVHRWWNQYLSMPLTDALMCVVVGTVHGHDERGRLYRRTLMRYAGLSGVLILRSVSTAVFKRFPTIDHVVEAGFMTREERKKFENLNSSYNKYWVPCVWFCNLAAQARREGRIRDNGAFKLLLEELNVFRSKCGMLFHYDWISVPLVYTQVVTIAVYSYFLACLIGRQFLDPAQGYKDHDLDLCVPIFTLLQFFFYAGWLKVAEQLINPFGEDDDDFETNFLIDRCFQVSMLAVDEMYDDLAMLEKDLYWDAAEARAPYTAATAFLMQQPSFQGSTFDITLAKEDMQFQRQDGLEAPLNEAHGDFLQRLLPVGTGMGTGGLLGRRVPLLRRKNSHVSEESMAASCACAGAPDGAVPECGCEGPLVDLGQPEPESEPITGPESPALVPAPRAPSEPLTVVPLSGTRGPAPPWLPSPIGEEEESLA.

Topologically, residues 1 to 31 are cytoplasmic; sequence MTVTYTARVAKARFGGFSKLLLLWRGSIYKL. Ala-10 contributes to the Ca(2+) binding site. A helical membrane pass occupies residues 32–51; it reads LWRELLCFLGLFMALSAAYR. Over 52 to 60 the chain is Extracellular; sequence FVLTEEQKR. The helical transmembrane segment at 61 to 82 threads the bilayer; sequence YFEKLVLYCDRYASLIPVSFVL. Topologically, residues 83 to 238 are cytoplasmic; it reads GFYVTLVVHR…WISVPLVYTQ (156 aa). Residues 239–255 form a helical membrane-spanning segment; the sequence is VVTIAVYSYFLACLIGR. At 256–274 the chain is on the extracellular side; that stretch reads QFLDPAQGYKDHDLDLCVP. A helical membrane pass occupies residues 275 to 288; the sequence is IFTLLQFFFYAGWL. Residues 289–512 lie on the Cytoplasmic side of the membrane; that stretch reads KVAEQLINPF…PIGEEEESLA (224 aa). Positions 293, 296, 301, and 304 each coordinate Ca(2+). The tract at residues 453–512 is disordered; that stretch reads VDLGQPEPESEPITGPESPALVPAPRAPSEPLTVVPLSGTRGPAPPWLPSPIGEEEESLA.

Belongs to the anion channel-forming bestrophin (TC 1.A.46) family. Calcium-sensitive chloride channel subfamily. As to quaternary structure, pentamer. Interacts with GLUL; this interaction tethers a fraction of GLUL to the membrane, causing a decrease of cytosolic glutamine synthase (GS) activity and inhibits the chloride channel activity of BEST2 by affecting the gating at the aperture in the absence of intracellular glutamate.

The protein resides in the cell membrane. It is found in the basolateral cell membrane. It carries out the reaction chloride(in) = chloride(out). The enzyme catalyses iodide(out) = iodide(in). The catalysed reaction is hydrogencarbonate(in) = hydrogencarbonate(out). It catalyses the reaction L-glutamate(out) = L-glutamate(in). It carries out the reaction L-glutamine(out) = L-glutamine(in). Chloride channel activity is allosterically inhibited by GLUL/glutamine synthase (GS) which affects the gating at the aperture in the absence of intracellular glutamate. Inhibitory effect of GLUL is relieved upon increasing of intracellular level of L-glutamate. Ligand-gated anion channel that allows the movement of anions across cell membranes when activated by calcium (Ca2+). Transports a large specter of anions, namely mediates the movement of chloride, L-glutamate and iodide. Calcium-binding triggers the dilation of the aperture, but calcium-dependent gating is only effective when the size of the passing anion is bigger than the closed aperture. Mediates the calcium-activated hydrogencarbonate movement and participates in colonic hydrogencarbonate secretion concomitant with mucin secretion. In non-pigmented epithelium (NPE), mediates the efflux of intracellular L-glutamate; binding of intracellular L-glutamate activates and open both the neck and the aperture of the channel, leading to L-glutamate exit promoting chloride influx movement from the extracellular side in trans. Also exhibits a directional permeability for intracellular glutamine, in a similar manner as for L-glutamate. The polypeptide is Bestrophin-2 (Bos taurus (Bovine)).